We begin with the raw amino-acid sequence, 1035 residues long: Potassium-transporting ATPase alpha chain 1 (1035 aa).

A disordered region spans residues 1–41 (MGKAENYELYSVELGPGPGGDMAAKMSKKKKAGGGGGKRKE). Residues 1–98 (MGKAENYELY…NALRPPRGTP (98 aa)) lie on the Cytoplasmic side of the membrane. 2 positions are modified to phosphotyrosine: Y7 and Y10. Residues 26–40 (MSKKKKAGGGGGKRK) are compositionally biased toward basic residues. Phosphoserine is present on S27. Residues 99-119 (EYVKFARQLAGGLQCLMWVAA) traverse the membrane as a helical segment. At 120-142 (AICLIAFAIQASEGDLTTDDNLY) the chain is on the lumenal side. The chain crosses the membrane as a helical span at residues 143–163 (LAIALIAVVVVTGCFGYYQEF). The Cytoplasmic segment spans residues 164–299 (KSTNIIASFK…NEKTPIAIEI (136 aa)). A helical transmembrane segment spans residues 300–319 (EHFVDIIAGLAILFGATFFI). Topologically, residues 320–331 (VAMCIGYTFLRA) are lumenal. Residues 332–349 (MVFFMAIVVAYVPEGLLA) traverse the membrane as a helical segment. The K(+) site is built by V340, A341, V343, and E345. At 350–783 (TVTVCLSLTA…EQGRLIFDNL (434 aa)) the chain is on the cytoplasmic side. The 4-aspartylphosphate intermediate role is filled by D387. Mg(2+) contacts are provided by D387 and T389. Phosphoserine occurs at positions 463 and 601. Positions 728 and 732 each coordinate Mg(2+). The chain crosses the membrane as a helical span at residues 784-803 (KKSIAYTLTKNIPELTPYLI). K(+) is bound at residue E797. Over 804 to 813 (YITVSVPLPL) the chain is Lumenal. A helical transmembrane segment spans residues 814 to 834 (GCITILFIELCTDIFPSVSLA). A K(+)-binding site is contributed by E822. Over 835-854 (YEKAESDIMHLRPRNPKRDR) the chain is Cytoplasmic. A Phosphoserine modification is found at S840. A helical membrane pass occupies residues 855 to 877 (LVNEPLAAYSYFQIGAIQSFAGF). Over 878–929 (TDYFTAMAQEGWFPLLCVGLRAQWEDHHLQDLQDSYGQEWTFGQRLYQQYTC) the chain is Lumenal. A helical transmembrane segment spans residues 930–949 (YTVFFISIEVCQIADVLIRK). Residues 950-963 (TRRLSAFQQGFFRN) lie on the Cytoplasmic side of the membrane. S954 is modified (phosphoserine; by PKA). A helical transmembrane segment spans residues 964-982 (KILVIAIVFQVCIGCFLCY). Residues 983 to 997 (CPGMPNIFNFMPIRF) are Lumenal-facing. The helical transmembrane segment at 998-1018 (QWWLVPLPYGILIFVYDEIRK) threads the bilayer. Residues 1019–1035 (LGVRCCPGSWWDQELYY) lie on the Cytoplasmic side of the membrane.

The protein belongs to the cation transport ATPase (P-type) (TC 3.A.3) family. Type IIC subfamily. As to quaternary structure, the gastric H(+)/K(+) ATPase pump is composed of the catalytic alpha subunit ATP4A and the regulatory beta subunit ATP4B. Interacts (via the P-domain) with ATP4B (via N-terminus); this interaction stabilizes the lumenal-open E2 conformation state and prevents the reverse reaction of the transport cycle. In terms of tissue distribution, expressed in gastric parietal cells (at protein level).

Its subcellular location is the apical cell membrane. It carries out the reaction K(+)(out) + ATP + H2O + H(+)(in) = K(+)(in) + ADP + phosphate + 2 H(+)(out). Functionally, the catalytic subunit of the gastric H(+)/K(+) ATPase pump which transports H(+) ions in exchange for K(+) ions across the apical membrane of parietal cells. Uses ATP as an energy source to pump H(+) ions to the gastric lumen while transporting K(+) ion from the lumen into the cell. Remarkably generates a million-fold proton gradient across the gastric parietal cell membrane, acidifying the gastric juice down to pH 1. Within a transport cycle, the transfer of a H(+) ion across the membrane is coupled to ATP hydrolysis and is associated with a transient phosphorylation that shifts the pump conformation from inward-facing (E1) to outward-facing state (E2). The release of the H(+) ion in the stomach lumen is followed by binding of K(+) ion converting the pump conformation back to the E1 state. This is Potassium-transporting ATPase alpha chain 1 from Homo sapiens (Human).